We begin with the raw amino-acid sequence, 115 residues long: Mediator of RNA polymerase II transcription subunit 9 (115 aa).

The segment at 1 to 31 is disordered; it reads MATGGTVRPAEEPEEEEEEEDEAVEEEEEED. A compositionally biased stretch (acidic residues) spans 12–31; that stretch reads EPEEEEEEEDEAVEEEEEED. The stretch at 31–107 forms a coiled coil; sequence DYTFLPLVHD…SELLQKYKSL (77 aa).

Belongs to the Mediator complex subunit 9 family. As to quaternary structure, component of the Mediator complex.

The protein localises to the nucleus. In terms of biological role, component of the Mediator complex, a coactivator involved in the regulated transcription of nearly all RNA polymerase II-dependent genes. Mediator functions as a bridge to convey information from gene-specific regulatory proteins to the basal RNA polymerase II transcription machinery. Mediator is recruited to promoters by direct interactions with regulatory proteins and serves as a scaffold for the assembly of a functional preinitiation complex with RNA polymerase II and the general transcription factors. The sequence is that of Mediator of RNA polymerase II transcription subunit 9 (med9) from Xenopus laevis (African clawed frog).